The chain runs to 175 residues: Large ribosomal subunit protein uL10 (175 aa).

Belongs to the universal ribosomal protein uL10 family. In terms of assembly, part of the ribosomal stalk of the 50S ribosomal subunit. The N-terminus interacts with L11 and the large rRNA to form the base of the stalk. The C-terminus forms an elongated spine to which L12 dimers bind in a sequential fashion forming a multimeric L10(L12)X complex.

Forms part of the ribosomal stalk, playing a central role in the interaction of the ribosome with GTP-bound translation factors. This chain is Large ribosomal subunit protein uL10, found in Methylobacterium nodulans (strain LMG 21967 / CNCM I-2342 / ORS 2060).